Consider the following 56-residue polypeptide: Large ribosomal subunit protein bL33 (56 aa).

Belongs to the bacterial ribosomal protein bL33 family.

This is Large ribosomal subunit protein bL33 (rpmG) from Treponema pallidum (strain Nichols).